Reading from the N-terminus, the 611-residue chain is tRNA uridine 5-carboxymethylaminomethyl modification enzyme MnmG (611 aa).

14–19 (GAGHAG) contributes to the FAD binding site. 274 to 288 (GPRYCPSIEDKIVKF) contacts NAD(+).

Belongs to the MnmG family. As to quaternary structure, homodimer. Heterotetramer of two MnmE and two MnmG subunits. FAD serves as cofactor.

Its subcellular location is the cytoplasm. NAD-binding protein involved in the addition of a carboxymethylaminomethyl (cmnm) group at the wobble position (U34) of certain tRNAs, forming tRNA-cmnm(5)s(2)U34. The chain is tRNA uridine 5-carboxymethylaminomethyl modification enzyme MnmG from Chlamydia felis (strain Fe/C-56) (Chlamydophila felis).